We begin with the raw amino-acid sequence, 92 residues long: Small ribosomal subunit protein uS19 (92 aa).

This sequence belongs to the universal ribosomal protein uS19 family.

In terms of biological role, protein S19 forms a complex with S13 that binds strongly to the 16S ribosomal RNA. The polypeptide is Small ribosomal subunit protein uS19 (Proteus mirabilis (strain HI4320)).